The chain runs to 346 residues: 4-hydroxy-2-oxovalerate aldolase 2 (346 aa).

One can recognise a Pyruvate carboxyltransferase domain in the interval 8–260 (VTVHDMTLRD…ETGVDVFKIQ (253 aa)). 16 to 17 (RD) contributes to the substrate binding site. Asp17 serves as a coordination point for Mn(2+). The active-site Proton acceptor is His20. The substrate site is built by Ser170 and His199. Residues His199 and His201 each contribute to the Mn(2+) site. Substrate is bound at residue Tyr290.

The protein belongs to the 4-hydroxy-2-oxovalerate aldolase family.

The catalysed reaction is (S)-4-hydroxy-2-oxopentanoate = acetaldehyde + pyruvate. This chain is 4-hydroxy-2-oxovalerate aldolase 2 (bphX3), found in Metapseudomonas furukawaii (Pseudomonas furukawaii).